The primary structure comprises 205 residues: UPF0111 protein YkaA (205 aa).

Belongs to the UPF0111 family.

This chain is UPF0111 protein YkaA (ykaA), found in Bacillus subtilis (strain 168).